An 80-amino-acid chain; its full sequence is FXYD domain-containing ion transport regulator 7 (80 aa).

At 1-23 (MATPTQTPTKAPEEPDPFYYDYN) the chain is on the extracellular side. Residues T3, T5, and T9 are each glycosylated (O-linked (GlcNAc) threonine). Residues 24–46 (TVQTVGMTLATILFLLGILIVIS) traverse the membrane as a helical segment. Residues 47–80 (KKVKCRKADSRSESPTCKSCKSELPSSAPGGGGV) lie on the Cytoplasmic side of the membrane. A disordered region spans residues 54–80 (ADSRSESPTCKSCKSELPSSAPGGGGV). S73 bears the Phosphoserine mark.

It belongs to the FXYD family. Regulatory subunit of the sodium/potassium-transporting ATPase which is composed of a catalytic alpha subunit, a non-catalytic beta subunit and a FXYD regulatory unit that modulates the enzymatic activity in a tissue- and isoform-specific way by changing affinities of the Na+/K+-ATPase toward Na(+), K(+) or ATP. In terms of processing, O-glycosylated; required for stabilization and translocation to the plasma membrane.

It localises to the cell membrane. Functionally, associates with and regulates the activity of the sodium/potassium-transporting ATPase (NKA) which catalyzes the hydrolysis of ATP coupled with the exchange of Na(+) and K(+) ions across the plasma membrane. Reduces the apparent affinity for external K(+), an effect that depends on the presence of external Na(+) and voltage. Increases the apparent affinity for intracellular Na(+). The polypeptide is FXYD domain-containing ion transport regulator 7 (FXYD7) (Homo sapiens (Human)).